The primary structure comprises 312 residues: Phosphoribosylglycinamide formyltransferase, chloroplastic (312 aa).

The N-terminal 73 residues, 1-73 (MEAQQIISRF…EVCSSSWRIW (73 aa)), are a transit peptide targeting the chloroplast. 109 to 111 (GSN) provides a ligand contact to N(1)-(5-phospho-beta-D-ribosyl)glycinamide. (6R)-10-formyltetrahydrofolate-binding positions include K162, 187–190 (LKLI), and N204. H206 serves as the catalytic Proton donor. D247 is a (6R)-10-formyltetrahydrofolate binding site. A N(1)-(5-phospho-beta-D-ribosyl)glycinamide-binding site is contributed by E276.

It belongs to the GART family.

The protein resides in the plastid. It localises to the chloroplast. It catalyses the reaction N(1)-(5-phospho-beta-D-ribosyl)glycinamide + (6R)-10-formyltetrahydrofolate = N(2)-formyl-N(1)-(5-phospho-beta-D-ribosyl)glycinamide + (6S)-5,6,7,8-tetrahydrofolate + H(+). It participates in purine metabolism; IMP biosynthesis via de novo pathway; N(2)-formyl-N(1)-(5-phospho-D-ribosyl)glycinamide from N(1)-(5-phospho-D-ribosyl)glycinamide (10-formyl THF route): step 1/1. The polypeptide is Phosphoribosylglycinamide formyltransferase, chloroplastic (PUR3) (Vigna unguiculata (Cowpea)).